Here is a 293-residue protein sequence, read N- to C-terminus: Ribosomal RNA small subunit methyltransferase H (293 aa).

Residues 31–33, aspartate 49, phenylalanine 76, aspartate 97, and glutamine 104 each bind S-adenosyl-L-methionine; that span reads GGY.

This sequence belongs to the methyltransferase superfamily. RsmH family.

The protein localises to the cytoplasm. The enzyme catalyses cytidine(1402) in 16S rRNA + S-adenosyl-L-methionine = N(4)-methylcytidine(1402) in 16S rRNA + S-adenosyl-L-homocysteine + H(+). In terms of biological role, specifically methylates the N4 position of cytidine in position 1402 (C1402) of 16S rRNA. This chain is Ribosomal RNA small subunit methyltransferase H, found in Wolbachia sp. subsp. Drosophila simulans (strain wRi).